Consider the following 261-residue polypeptide: Cytochrome c oxidase subunit 3 (261 aa).

Residues 1-15 (MAHQAHPYHMVDPSP) lie on the Mitochondrial matrix side of the membrane. Residues 16-34 (WPLTGATAALLMTSGLAIW) form a helical membrane-spanning segment. At 35 to 40 (FHFHSL) the chain is on the mitochondrial intermembrane side. A helical membrane pass occupies residues 41-66 (LLLYLGLTLLLLTMIQWWRDIIREGT). The Mitochondrial matrix portion of the chain corresponds to 67–72 (FQGHHT). A helical transmembrane segment spans residues 73-105 (PPVQKGLRYGMILFIVSEVFFFLGFFWAFYHSS). The Mitochondrial intermembrane segment spans residues 106–128 (LAPTPELGGCWPPTGINPLDPFE). The helical transmembrane segment at 129 to 152 (VPLLNTAVLLASGVTVTWAHHGLM) threads the bilayer. The Mitochondrial matrix segment spans residues 153–155 (EGN). Residues 156 to 183 (RKEAIQALTLTIILGVYFTALQAMEYYE) traverse the membrane as a helical segment. The Mitochondrial intermembrane segment spans residues 184–190 (APFTIAD). A helical transmembrane segment spans residues 191 to 223 (GVYGTTFFVATGFHGLHVIIGSTFLAVCLLRQV). At 224–232 (LYHFTSEHH) the chain is on the mitochondrial matrix side. A helical membrane pass occupies residues 233 to 256 (FGFEAAAWYWHFVDVVWLFLYVSI). Topologically, residues 257 to 261 (YWWGS) are mitochondrial intermembrane.

Belongs to the cytochrome c oxidase subunit 3 family. In terms of assembly, component of the cytochrome c oxidase (complex IV, CIV), a multisubunit enzyme composed of 14 subunits. The complex is composed of a catalytic core of 3 subunits MT-CO1, MT-CO2 and MT-CO3, encoded in the mitochondrial DNA, and 11 supernumerary subunits COX4I, COX5A, COX5B, COX6A, COX6B, COX6C, COX7A, COX7B, COX7C, COX8 and NDUFA4, which are encoded in the nuclear genome. The complex exists as a monomer or a dimer and forms supercomplexes (SCs) in the inner mitochondrial membrane with NADH-ubiquinone oxidoreductase (complex I, CI) and ubiquinol-cytochrome c oxidoreductase (cytochrome b-c1 complex, complex III, CIII), resulting in different assemblies (supercomplex SCI(1)III(2)IV(1) and megacomplex MCI(2)III(2)IV(2)).

Its subcellular location is the mitochondrion inner membrane. The catalysed reaction is 4 Fe(II)-[cytochrome c] + O2 + 8 H(+)(in) = 4 Fe(III)-[cytochrome c] + 2 H2O + 4 H(+)(out). Its function is as follows. Component of the cytochrome c oxidase, the last enzyme in the mitochondrial electron transport chain which drives oxidative phosphorylation. The respiratory chain contains 3 multisubunit complexes succinate dehydrogenase (complex II, CII), ubiquinol-cytochrome c oxidoreductase (cytochrome b-c1 complex, complex III, CIII) and cytochrome c oxidase (complex IV, CIV), that cooperate to transfer electrons derived from NADH and succinate to molecular oxygen, creating an electrochemical gradient over the inner membrane that drives transmembrane transport and the ATP synthase. Cytochrome c oxidase is the component of the respiratory chain that catalyzes the reduction of oxygen to water. Electrons originating from reduced cytochrome c in the intermembrane space (IMS) are transferred via the dinuclear copper A center (CU(A)) of subunit 2 and heme A of subunit 1 to the active site in subunit 1, a binuclear center (BNC) formed by heme A3 and copper B (CU(B)). The BNC reduces molecular oxygen to 2 water molecules using 4 electrons from cytochrome c in the IMS and 4 protons from the mitochondrial matrix. This Scyliorhinus canicula (Small-spotted catshark) protein is Cytochrome c oxidase subunit 3 (MT-CO3).